Consider the following 342-residue polypeptide: L-threonine 3-dehydrogenase (342 aa).

Cysteine 38 is a Zn(2+) binding site. Catalysis depends on charge relay system residues threonine 40 and histidine 43. Zn(2+)-binding residues include histidine 63, glutamate 64, cysteine 93, cysteine 96, cysteine 99, and cysteine 107. NAD(+) contacts are provided by residues isoleucine 175, aspartate 195, arginine 200, 262 to 264 (LGI), and 286 to 287 (IY).

This sequence belongs to the zinc-containing alcohol dehydrogenase family. Homotetramer. Zn(2+) serves as cofactor.

Its subcellular location is the cytoplasm. The enzyme catalyses L-threonine + NAD(+) = (2S)-2-amino-3-oxobutanoate + NADH + H(+). It participates in amino-acid degradation; L-threonine degradation via oxydo-reductase pathway; glycine from L-threonine: step 1/2. Functionally, catalyzes the NAD(+)-dependent oxidation of L-threonine to 2-amino-3-ketobutyrate. The polypeptide is L-threonine 3-dehydrogenase (Aeromonas salmonicida (strain A449)).